The sequence spans 459 residues: Pentatricopeptide repeat-containing protein At5g18390, mitochondrial (459 aa).

A mitochondrion-targeting transit peptide spans 1–7; that stretch reads MLLLRRY. PPR repeat units lie at residues 110–144, 145–175, 181–215, 216–250, 251–285, 286–320, 321–355, 356–390, and 391–425; these read TSMEYEELAKSLASHKKYESMWKILKQMKDLSLDI, SGETLCFIIEQYGKNGHVDQAVELFNGVPKT, TVDVYNSLLHALCDVKMFHGAYALIRRMIRKGLKP, DKRTYAILVNGWCSAGKMKEAQEFLDEMSRRGFNP, PARGRDLLIEGLLNAGYLESAKEMVSKMTKGGFVP, DIQTFNILIEAISKSGEVEFCIEMYYTACKLGLCV, DIDTYKTLIPAVSKIGKIDEAFRLLNNCVEDGHKP, FPSLYAPIIKGMCRNGMFDDAFSFFSDMKVKAHPP, and NRPVYTMLITMCGRGGKFVDAANYLVEMTEMGLVP.

It belongs to the PPR family. P subfamily.

The protein resides in the mitochondrion. The polypeptide is Pentatricopeptide repeat-containing protein At5g18390, mitochondrial (Arabidopsis thaliana (Mouse-ear cress)).